The following is a 222-amino-acid chain: Small ribosomal subunit protein uS7m (222 aa).

Residues 1 to 14 (MTTKLARFAQKRWI) constitute a mitochondrion transit peptide.

This sequence belongs to the universal ribosomal protein uS7 family. Component of the mitochondrial ribosome small subunit (28S) which comprises a 12S rRNA and about 30 distinct proteins.

The protein resides in the mitochondrion. The polypeptide is Small ribosomal subunit protein uS7m (mrps-7) (Caenorhabditis elegans).